The primary structure comprises 74 residues: Translational regulator CsrA (74 aa).

This sequence belongs to the CsrA/RsmA family. In terms of assembly, homodimer. The beta-strands of each monomer intercalate to form a hydrophobic core while the alpha-helices form wings that extend away from the core. Two molecules of FliW interact with 1 homodimer. mRNA and FliW bind to different sites on CsrA.

It localises to the cytoplasm. A translational regulator that binds mRNA to regulate translation initiation and/or mRNA stability. Usually binds in the 5'-UTR at or near the Shine-Dalgarno sequence preventing ribosome-binding, thus repressing translation. Represses expression of flagellin (hag) in a post-transcriptional fashion. Specifically binds to 2 sites in the 5'-UTR of hag mRNA in a cooperative fashion; the second site overlaps the Shine-Dalgarno sequence and prevents 30S ribosomal subunit binding. Mutation of either binding site abolishes CsrA regulation of hag expression. Repression is greater in the 1A96 than 168 genetic background and higher in minimal than rich medium. Translation repression is antagonized by FliW. Partner switching by flagellin between FliW and CsrA provides a flagellar assembly checkpoint to tightly control the timing of flagellin synthesis. Flagellin binds to assembly factor FliW, freeing CsrA to repress translation of the flagellin mRNA. When the flagellar hook is assembled flagellin is secreted, depleting intracellular flagellin, which frees FliW to interact with CsrA and inhibits CsrA binding to mRNA. This derepresses flagellin translation and provides protein for flagellar assembly. Once the flagellar filament is completed cytoplasmic flagellin levels rise and CsrA translation repression of flagellin reinitiates. Overexpression leads to a dramatic reduction in motility, a significant reduction in flagellin synthesis and reduced flagella assembly. This is Translational regulator CsrA from Bacillus subtilis (strain 168).